The chain runs to 827 residues: Transcription factor SOX-6 (827 aa).

Residues Met-1–Phe-10 show a composition bias toward polar residues. The disordered stretch occupies residues Met-1–Pro-51. Residues Thr-25–Asp-34 show a composition bias toward basic and acidic residues. Thr-119 bears the Phosphothreonine mark. The stretch at Leu-184–Gln-257 forms a coiled coil. Disordered stretches follow at residues His-329–Ser-360 and Ser-380–Gly-470. Over residues Gly-341 to Gly-357 the composition is skewed to basic and acidic residues. Ser-399 is subject to Phosphoserine. A Phosphothreonine modification is found at Thr-401. Residues Lys-404 and Lys-417 each participate in a glycyl lysine isopeptide (Lys-Gly) (interchain with G-Cter in SUMO) cross-link. Composition is skewed to polar residues over residues Thr-421 to Pro-431 and Ser-439 to Lys-461. Residues Ser-439 and Ser-442 each carry the phosphoserine modification. A DNA-binding region (HMG box) is located at residues Ile-620 to Lys-688. Disordered stretches follow at residues Thr-752–Leu-772 and Ala-786–Asn-827. The span at Asn-795–Asp-808 shows a compositional bias: acidic residues.

In terms of assembly, homodimer. Interacts with DAZAP2. May interact with CENPK. In terms of processing, sumoylation inhibits the transcriptional activity.

It is found in the nucleus. The protein resides in the cytoplasm. Functionally, transcription factor that plays a key role in several developmental processes, including neurogenesis, chondrocytes differentiation and cartilage formation. Specifically binds the 5'-AACAAT-3' DNA motif present in enhancers and super-enhancers and promotes expression of genes important for chondrogenesis. Required for overt chondrogenesis when condensed prechondrocytes differentiate into early stage chondrocytes: SOX5 and SOX6 cooperatively bind with SOX9 on active enhancers and super-enhancers associated with cartilage-specific genes, and thereby potentiate SOX9's ability to transactivate. Not involved in precartilaginous condensation, the first step in chondrogenesis, during which skeletal progenitors differentiate into prechondrocytes. Together with SOX5, required to form and maintain a pool of highly proliferating chondroblasts between epiphyses and metaphyses, to form columnar chondroblasts, delay chondrocyte prehypertrophy but promote hypertrophy, and to delay terminal differentiation of chondrocytes on contact with ossification fronts. Binds to the proximal promoter region of the myelin protein MPZ gene, and is thereby involved in the differentiation of oligodendroglia in the developing spinal tube. Binds to the gene promoter of MBP and acts as a transcriptional repressor. This chain is Transcription factor SOX-6, found in Rattus norvegicus (Rat).